A 380-amino-acid chain; its full sequence is Cytochrome b (380 aa).

The next 4 helical transmembrane spans lie at Phe-34–Met-54, Trp-78–Ile-99, Trp-114–Leu-134, and Phe-179–Leu-199. Residues His-84 and His-98 each contribute to the heme b site. Heme b contacts are provided by His-183 and His-197. An a ubiquinone-binding site is contributed by His-202. A run of 4 helical transmembrane segments spans residues Tyr-227–Ser-247, Leu-289–His-309, Met-321–Gly-341, and Phe-348–Pro-368.

Belongs to the cytochrome b family. The cytochrome bc1 complex contains 3 respiratory subunits (MT-CYB, CYC1 and UQCRFS1), 2 core proteins (UQCRC1 and UQCRC2) and probably 6 low-molecular weight proteins. Heme b serves as cofactor.

It localises to the mitochondrion inner membrane. Functionally, component of the ubiquinol-cytochrome c reductase complex (complex III or cytochrome b-c1 complex) that is part of the mitochondrial respiratory chain. The b-c1 complex mediates electron transfer from ubiquinol to cytochrome c. Contributes to the generation of a proton gradient across the mitochondrial membrane that is then used for ATP synthesis. This Ranodon sibiricus (Siberian salamander) protein is Cytochrome b (mt-cyb).